The chain runs to 243 residues: Venom nerve growth factor (243 aa).

Positions 1-18 (MSMLCYTLIIAFLIGIWA) are cleaved as a signal peptide. Positions 19-125 (APKSEDNVPL…TLNRNIRTKR (107 aa)) are excised as a propeptide. Residues 45–66 (HEGLKTSRNTDQRHLAPKKAED) form a disordered region. Basic and acidic residues predominate over residues 46-66 (EGLKTSRNTDQRHLAPKKAED). Cystine bridges form between cysteine 139/cysteine 204, cysteine 182/cysteine 232, and cysteine 192/cysteine 234. The N-linked (GlcNAc...) asparagine glycan is linked to asparagine 148.

It belongs to the NGF-beta family. As to quaternary structure, homodimer; non-covalently linked. Expressed by the venom gland.

It localises to the secreted. In terms of biological role, nerve growth factor is important for the development and maintenance of the sympathetic and sensory nervous systems. It stimulates division and differentiation of sympathetic and embryonic sensory neurons as well as basal forebrain cholinergic neurons in the brain. Its relevance in the snake venom is not clear. However, it has been shown to inhibit metalloproteinase-dependent proteolysis of platelet glycoprotein Ib alpha, suggesting a metalloproteinase inhibition to prevent metalloprotease autodigestion and/or protection against prey proteases. Binds a lipid between the two protein chains in the homodimer. The lipid-bound form promotes histamine relase from mouse mast cells, contrary to the lipid-free form. The protein is Venom nerve growth factor of Cryptophis nigrescens (Eastern small-eyed snake).